Consider the following 210-residue polypeptide: Leucyl/phenylalanyl-tRNA--protein transferase (210 aa).

It belongs to the L/F-transferase family.

It is found in the cytoplasm. The catalysed reaction is N-terminal L-lysyl-[protein] + L-leucyl-tRNA(Leu) = N-terminal L-leucyl-L-lysyl-[protein] + tRNA(Leu) + H(+). The enzyme catalyses N-terminal L-arginyl-[protein] + L-leucyl-tRNA(Leu) = N-terminal L-leucyl-L-arginyl-[protein] + tRNA(Leu) + H(+). It carries out the reaction L-phenylalanyl-tRNA(Phe) + an N-terminal L-alpha-aminoacyl-[protein] = an N-terminal L-phenylalanyl-L-alpha-aminoacyl-[protein] + tRNA(Phe). In terms of biological role, functions in the N-end rule pathway of protein degradation where it conjugates Leu, Phe and, less efficiently, Met from aminoacyl-tRNAs to the N-termini of proteins containing an N-terminal arginine or lysine. The polypeptide is Leucyl/phenylalanyl-tRNA--protein transferase (Roseobacter denitrificans (strain ATCC 33942 / OCh 114) (Erythrobacter sp. (strain OCh 114))).